The following is a 157-amino-acid chain: Chromophore lyase CpcS/CpeS 1 (157 aa).

The protein belongs to the CpcS/CpeS biliprotein lyase family.

It is found in the plastid. The protein resides in the organellar chromatophore. In terms of biological role, covalently attaches a chromophore to Cys residue(s) of phycobiliproteins. This chain is Chromophore lyase CpcS/CpeS 1, found in Paulinella chromatophora.